A 614-amino-acid chain; its full sequence is Zinc metalloproteinase dpy-31 (614 aa).

A signal peptide spans 1-24 (MSLLRCTTLLLVVVAIALPPCILG). Positions 25 to 150 (YSLHDGSRLD…KTGQRRVKRK (126 aa)) are excised as a propeptide. The 200-residue stretch at 150-349 (KFIGSDLRRW…IRLMNKIYCS (200 aa)) folds into the Peptidase M12A domain. The N-linked (GlcNAc...) asparagine glycan is linked to Asn190. 5 disulfides stabilise this stretch: Cys193-Cys348, Cys216-Cys237, Cys352-Cys372, Cys374-Cys383, and Cys394-Cys422. His245 serves as a coordination point for Zn(2+). The active site involves Glu246. His249 and His255 together coordinate Zn(2+). The EGF-like domain maps to 344 to 384 (NKIYCSNVCSRKLPCQRGGYTDPRRCDRCRCPDGFTGQFCE). The 117-residue stretch at 394–510 (CGGRIQVNGG…RGFEARARAL (117 aa)) folds into the CUB domain. Asn461 carries an N-linked (GlcNAc...) asparagine glycan. The TSP type-1 domain occupies 513–562 (NGQWASWSPWTPCTASCGACGSRMRTRVCSHGACAGEPVENQVCNTHPCN). Disulfide bonds link Cys525/Cys556, Cys529/Cys561, and Cys541/Cys546.

Requires Zn(2+) as cofactor.

The protein resides in the secreted. Its activity is regulated as follows. Inhibited by marimastat and tripeptide hydroxamic acids. Inhibited by 1,10-phenanthroline. In terms of biological role, metalloprotease which cleaves the carboxyl terminus of procollagens to mature collagens. Probably involved in cuticular collagen maturation. This Teladorsagia circumcincta (Brown stomach worm) protein is Zinc metalloproteinase dpy-31.